Reading from the N-terminus, the 608-residue chain is MCGIVGIVGHKPVSERLIEALGRLEYRGYDSSGVATIFEGELHRRRAEGKLGNLKTRLKEAPLSGTVGIAHTRWATHGAPTECNAHPHFTDGVAVVHNGIIENFSKLKDALAEVGTKFQTDTDTEVIAHLLTKFRRDGMGCLEAMHAMLKCVEGAFALAILFEDDPATIMVARNGPPLVIGHGDGEMFLGSDAIALAPFTNDITYLNDGDWAVVGKTSVQVFDIEGNVVTRPRHISLATADLVGKGNHPHFMEKEIYEQPEVIARALGHYINVNDSHVTTTSTDIDFAGVESLAISACGTAYLAGLIGKYWFERYARLIVEIDVASEFRYREIPLSPRSAALFISQSGETADTLASLRYCKAHGLRIGAVVNTRESTMAREADAIFPILAGPEIGVASTKAFTCQLAVLAALRIGAGKARGTITDDEEQVLVQSLATLPGVMRQVLNDITPEIELLSRELSHYRDVLYLGRGTSFPLAMEGALKLKEVSYIHAEGYAAGELKHGPIALIDENMPVIVIAPHDRFFDKTVSNMQEVAARGGRIILITDETGASMSKLPTMHTIVLPDVAEIIAPMIFSLPLQLLAYHTAVVMGADVDQPRNLAKSVTVE.

Cys2 acts as the Nucleophile; for GATase activity in catalysis. In terms of domain architecture, Glutamine amidotransferase type-2 spans 2-217; that stretch reads CGIVGIVGHK…DGDWAVVGKT (216 aa). SIS domains are found at residues 283-422 and 456-598; these read TDID…ARGT and LSRE…VDQP. Catalysis depends on Lys603, which acts as the For Fru-6P isomerization activity.

It is found in the cytoplasm. The enzyme catalyses D-fructose 6-phosphate + L-glutamine = D-glucosamine 6-phosphate + L-glutamate. Involved in the production of the root hair deformation (HAD) factor specifically on medicago. The chain is Glutamine--fructose-6-phosphate aminotransferase [isomerizing] (nodM) from Rhizobium leguminosarum bv. viciae.